The primary structure comprises 692 residues: Elongation factor G (692 aa).

One can recognise a tr-type G domain in the interval 8-282 (EKVRNIGIAA…AVVDYLPAPT (275 aa)). GTP is bound by residues 17–24 (AHIDAGKT), 81–85 (DTPGH), and 135–138 (NKMD).

This sequence belongs to the TRAFAC class translation factor GTPase superfamily. Classic translation factor GTPase family. EF-G/EF-2 subfamily.

It localises to the cytoplasm. Functionally, catalyzes the GTP-dependent ribosomal translocation step during translation elongation. During this step, the ribosome changes from the pre-translocational (PRE) to the post-translocational (POST) state as the newly formed A-site-bound peptidyl-tRNA and P-site-bound deacylated tRNA move to the P and E sites, respectively. Catalyzes the coordinated movement of the two tRNA molecules, the mRNA and conformational changes in the ribosome. This Trichormus variabilis (strain ATCC 29413 / PCC 7937) (Anabaena variabilis) protein is Elongation factor G.